The sequence spans 477 residues: MAATTTATSLFSSRLHFQNQNQGYGFPAKTPNSLQVNQIIDGRKMRNATVLSAASTDKAITTAQSVAPTACDRVRRHTISVFVGDESGIINRIAGVFARRGYNIESLAVGLNEDKALFTIVVLGTDKVLQQVVEQLNKLVNVIKVEDLSKEPHVERELMLIKLNADPSTRSEIMWLVDIFRAKIVDTSEQSLTIEVTGDPGKMVALTTNLEKFGIKEIARTGKIALRREKMGETAPFWRFSAASYPHLVKESSHETVAEKTKLALTGNGNASSGGDVYPVEPYNDFKPVLDAHWGMVYDEDSSGLRSHTLSLLVANVPGVLNLITGAISRRGYNIQSLAVGPAEKEGLSRITTVIPGTDENIDKLVRQLQKLIDLQEIQNITHMPFAERELMLIKVAADTSARRDVLDIAQVFRAKAIDVSDHTITLEVTGDLRKMSALQTQLEAYGICEVARTGRVALVRESGVDSTYLRGYSLPL.

The N-terminal 53 residues, 1 to 53 (MAATTTATSLFSSRLHFQNQNQGYGFPAKTPNSLQVNQIIDGRKMRNATVLSA), are a transit peptide targeting the chloroplast. ACT domains follow at residues 78–150 (TISV…DLSK) and 309–383 (TLSL…NITH). L-valine-binding residues include Asp-85, Ile-89, Ile-90, Asn-103, Ile-104, Asn-316, Val-320, Leu-321, Asn-334, and Ile-335.

It belongs to the acetolactate synthase small subunit family. As to quaternary structure, the acetolactate synthase complex contains 4 homodimers of the large catalytic subunits, and 1 homotetramer of the small regulatory subunits. In terms of tissue distribution, expressed in roots in the vascular tissuem in cells around the quiescent center, in floral organs at the tips of young siliques and in the joint region between the silique and the pedicel. Barely detectable in mature leaves or siliques.

The protein resides in the plastid. Its subcellular location is the chloroplast. The protein localises to the peroxisome. The protein operates within amino-acid biosynthesis; L-isoleucine biosynthesis; L-isoleucine from 2-oxobutanoate: step 1/4. It participates in amino-acid biosynthesis; L-valine biosynthesis; L-valine from pyruvate: step 1/4. In terms of biological role, regulatory subunit of acetohydroxy-acid synthase. Involved in the feed-back inhibition by branched-chain amino acids but not in herbicide tolerance. May play a role in valine and isoleucine-mediated feedback inhibition in roots. In vitro, inhibited by valine, but not leucine or isoleucine. Required for reproductive development and sodium homeostasis. This chain is Acetolactate synthase small subunit 2, chloroplastic, found in Arabidopsis thaliana (Mouse-ear cress).